The sequence spans 317 residues: Protease 7 (317 aa).

Positions 1–20 are cleaved as a signal peptide; sequence MRAKLLGIVLTTPIAISSFA. The Periplasmic portion of the chain corresponds to 21–31; the sequence is STETLSFTPDN. The chain crosses the membrane as a beta stranded span at residues 32–41; it reads INADISLGTL. Residues 42-69 lie on the Extracellular side of the membrane; the sequence is SGKTKERVYLAEEGGRKVSQLDWKFNNA. The chain crosses the membrane as a beta stranded span at residues 70–78; it reads AIIKGAINW. Over 79–83 the chain is Periplasmic; it reads DLMPQ. The beta stranded transmembrane segment at 84-92 threads the bilayer; sequence ISIGAAGWT. Residues 93–130 lie on the Extracellular side of the membrane; sequence TLGSRGGNMVDQDWMDSSNPGTWTDESRHPDTQLNYAN. Active-site residues include aspartate 103 and aspartate 105. A beta stranded membrane pass occupies residues 131–140; the sequence is EFDLNIKGWL. Topologically, residues 141–145 are periplasmic; that stretch reads LNEPN. Residues 146 to 156 form a beta stranded membrane-spanning segment; it reads YRLGLMAGYQE. Topologically, residues 157 to 197 are extracellular; it reads SRYSFTARGGSYIYSSEEGFRDDIGSFPNGERAIGYKQRFK. The chain crosses the membrane as a beta stranded span at residues 198 to 209; it reads MPYIGLTGSYRY. The Periplasmic portion of the chain corresponds to 210-211; that stretch reads ED. A beta stranded transmembrane segment spans residues 212-221; sequence FELGGTFKYS. Residues 222–250 are Extracellular-facing; the sequence is GWVESSDNDEHYDPGKRITYRSKVKDQNY. Catalysis depends on residues aspartate 230 and histidine 232. Residues 251 to 261 traverse the membrane as a beta stranded segment; it reads YSVAVNAGYYV. The Periplasmic segment spans residues 262–264; the sequence is TPN. The chain crosses the membrane as a beta stranded span at residues 265-274; that stretch reads AKVYVEGAWN. The Extracellular portion of the chain corresponds to 275–306; sequence RVTNKKGNTSLYDHNNNTSDYSKNGAGIENYN. The chain crosses the membrane as a beta stranded span at residues 307 to 316; sequence FITTAGLKYT. A topological domain (periplasmic) is located at residue phenylalanine 317.

Belongs to the peptidase A26 family. As to quaternary structure, homopentamer.

It localises to the cell outer membrane. It carries out the reaction Has a virtual requirement for Arg in the P1 position and a slightly less stringent preference for this residue in the P1' position, which can also contain Lys, Gly or Val.. Its activity is regulated as follows. Inhibited by zinc. Its function is as follows. Protease that can cleave T7 RNA polymerase, ferric enterobactin receptor protein (FEP), antimicrobial peptide protamine and other proteins. This protease has a specificity for paired basic residues. The chain is Protease 7 (ompT) from Escherichia coli (strain K12).